The sequence spans 115 residues: Holo-[acyl-carrier-protein] synthase (115 aa).

Residues D6 and E51 each coordinate Mg(2+).

This sequence belongs to the P-Pant transferase superfamily. AcpS family. Requires Mg(2+) as cofactor.

It is found in the cytoplasm. The enzyme catalyses apo-[ACP] + CoA = holo-[ACP] + adenosine 3',5'-bisphosphate + H(+). Transfers the 4'-phosphopantetheine moiety from coenzyme A to a Ser of acyl-carrier-protein. The protein is Holo-[acyl-carrier-protein] synthase of Campylobacter jejuni subsp. jejuni serotype O:23/36 (strain 81-176).